A 1384-amino-acid chain; its full sequence is RRP12-like protein (1384 aa).

The segment covering M1–K13 has biased composition (basic residues). The interval M1–H32 is disordered. Over residues R19–Q29 the composition is skewed to polar residues. 7 positions are modified to phosphoserine: S82, S85, S96, S1094, S1095, S1117, and S1119. Disordered regions lie at residues L1082–G1102, L1114–D1155, and S1176–K1384. Composition is skewed to acidic residues over residues A1090–L1099 and L1114–A1127. Polar residues predominate over residues S1176–Q1191. A phosphoserine mark is found at S1221, S1225, S1227, S1230, S1250, and S1251. Composition is skewed to polar residues over residues S1276–Y1285 and T1297–P1315. Positions G1321–K1334 are enriched in basic and acidic residues. Positions L1348–S1362 are enriched in basic residues. Residues A1369–R1378 are compositionally biased toward gly residues.

This sequence belongs to the RRP12 family.

Its subcellular location is the nucleus. The chain is RRP12-like protein from Drosophila melanogaster (Fruit fly).